Reading from the N-terminus, the 500-residue chain is L-arabinose isomerase (500 aa).

4 residues coordinate Mn(2+): E306, E333, H349, and H448.

The protein belongs to the arabinose isomerase family. Mn(2+) serves as cofactor.

The enzyme catalyses beta-L-arabinopyranose = L-ribulose. Its pathway is carbohydrate degradation; L-arabinose degradation via L-ribulose; D-xylulose 5-phosphate from L-arabinose (bacterial route): step 1/3. In terms of biological role, catalyzes the conversion of L-arabinose to L-ribulose. This is L-arabinose isomerase from Shewanella sp. (strain ANA-3).